The following is a 132-amino-acid chain: Ubiquinol-cytochrome c reductase complex assembly factor 4 (132 aa).

Positions 1–15 are cleaved as a signal peptide; sequence MNRVLCAPAAGAVRA. At 16 to 78 the chain is on the mitochondrial matrix side; sequence LRLIGWASRS…GKGHQRPWWK (63 aa). The segment at 29–72 is disordered; that stretch reads LPGSRDRAHPAAEEEDDPDRPIEFSSSKANPHRWSVGHTMGKGH. Residues 79–95 form a helical membrane-spanning segment; the sequence is VLPLSCFLVALIIWCYL. Over 96–132 the chain is Mitochondrial intermembrane; sequence REESEADQWLRQVWGEVPEPSDRSEEPETPAAYRART. The interval 110-132 is disordered; that stretch reads GEVPEPSDRSEEPETPAAYRART.

The protein belongs to the UQCC4 family. In terms of assembly, forms a complex, named COMB/coordinator of mitochondrial CYTB biogenesis, composed of UQCC1, UQCC2, UQCC4, UQCC5 and UQCC6; stabilizes nascent cytochrome b/MT-CYB and promotes its membrane insertion. Forms a complex, named COMA, composed of UQCC1, UQCC2 and UQCC4; activates MT-CYB translation. Forms a complex, named COMC, composed of UQCC1, UQCC2; UQCC3 and UQCC4; mediates MT-CYB hemylation and association with the first nuclear-encoded complex III subunit UQCRQ. Complexes COMA and COMB are bound to the mitochondrion inner membrane by UQCC4.

It localises to the mitochondrion inner membrane. In terms of biological role, required for the assembly and stability of the mitochondrial ubiquinol-cytochrome c reductase complex (complex III (CIII) or cytochrome b-c1 complex), a multisubunit transmembrane complex that is part of the mitochondrial electron transport chain (ETC) which drives oxidative phosphorylation. The chain is Ubiquinol-cytochrome c reductase complex assembly factor 4 from Homo sapiens (Human).